A 121-amino-acid chain; its full sequence is Large ribosomal subunit protein uL14c (121 aa).

This sequence belongs to the universal ribosomal protein uL14 family. In terms of assembly, part of the 50S ribosomal subunit.

It localises to the plastid. The protein localises to the chloroplast. Binds to 23S rRNA. The sequence is that of Large ribosomal subunit protein uL14c from Thalassiosira pseudonana (Marine diatom).